Here is a 260-residue protein sequence, read N- to C-terminus: UPF0246 protein SCO2297 (260 aa).

This sequence belongs to the UPF0246 family.

This Streptomyces coelicolor (strain ATCC BAA-471 / A3(2) / M145) protein is UPF0246 protein SCO2297.